The primary structure comprises 542 residues: MDSVSNVSVNEQGKFNDKEEGFSNLKSLKHVSHSETDFEVSNDEDNQLLELGYKPVFKREFSTWATFSFAFSISGLFATVVTTYSYPLISGGAPSAVWCWLIAGAGCMCIALSVAELVSAYPTSGGLYFTCKDLVPARSMPVVAWVVGWLNLLGQAAGVSSTDWSCAQLLLAAVSISTDLKYIPTNQHIVGVMAAVIVFHGLVNSLSTRWLDRITRFYATFHLIVLVVCMICLLAKCPKFNTGKYVFTDVQASSGWHPIGFSFLFGFLSVAWCMTDYDATAHIAEEIENAAVRAPNAIALALSITYVLGWVFNIVLAFTMGTDLDSLINSELGQPVAQIFYNVLGKKGSMAFTILSFIIINFTGITAMQANARTIWAFSRDQALPFSRYWYKINKTTTTPVIAVWLNVVFCIALNLIGLGSIEAIEAIFSVCAIALDWSYVIPIACKLIFGKRLNYKPGPWNLGWASHFVNAYAVCWTAFVSVIFLMPTVRPVTPQNMNYAVVVLAGVLLFSLVYWWSGARKSYIGPRINVDMESEDPFKTE.

N-linked (GlcNAc...) asparagine glycosylation occurs at N6. 8 helical membrane-spanning segments follow: residues 61–81 (FSTW…ATVV), 95–115 (SAVW…LSVA), 139–159 (SMPV…AAGV), 188–208 (HIVG…SLST), 217–237 (FYAT…LAKC), 255–275 (GWHP…WCMT), 298–318 (IALA…VLAF), and 348–368 (GSMA…ITAM). Residue N394 is glycosylated (N-linked (GlcNAc...) asparagine). A run of 4 helical transmembrane segments spans residues 402–422 (IAVW…LGSI), 424–444 (AIEA…VIPI), 469–489 (FVNA…LMPT), and 500–520 (YAVV…WSGA).

Belongs to the amino acid-polyamine-organocation (APC) superfamily.

The protein localises to the golgi apparatus. It localises to the membrane. This is an uncharacterized protein from Schizosaccharomyces pombe (strain 972 / ATCC 24843) (Fission yeast).